Consider the following 305-residue polypeptide: N-acetylglucosamine-1-phosphotransferase subunit gamma (305 aa).

The N-terminal stretch at 1–24 (MAAGLARLLLLLGLSAGGPAPAGA) is a signal peptide. The MRH domain occupies 69 to 171 (GKCFSLVEST…TFETPLVCHP (103 aa)). Cysteine 71 and cysteine 84 are disulfide-bonded. Asparagine 88 and asparagine 115 each carry an N-linked (GlcNAc...) asparagine glycan. Disulfide bonds link cysteine 129-cysteine 157 and cysteine 142-cysteine 169. The 104-residue stretch at 176 to 279 (VYPTLPEALQ…YTRPTETSNL (104 aa)) folds into the DMAP1-binding domain. The tract at residues 267–305 (GIPYTRPTETSNLEHLGHETPRAKSPEQLRGDPGLRGSL) is disordered. Basic and acidic residues predominate over residues 281-296 (HLGHETPRAKSPEQLR).

In terms of assembly, homodimer; disulfide-linked. Hexamer of two alpha (GNPTAB), two beta (GNPTAB) and two gamma (GNPTG) subunits; disulfide-linked. The alpha and/or the beta subunits of the enzyme constitute the catalytic subunits. In terms of processing, cys-245 mediates the formation of the interchain disulfide bond for formation of the homodimer. Cys-142, Cys-157 and Cys-169 are involved in intramolecular disulfide bonds formation. In terms of tissue distribution, widely expressed.

It localises to the secreted. The protein resides in the golgi apparatus. Functionally, non-catalytic subunit of the N-acetylglucosamine-1-phosphotransferase complex, an enzyme that catalyzes the formation of mannose 6-phosphate (M6P) markers on high mannose type oligosaccharides in the Golgi apparatus. Binds and presents the high mannose glycans of the acceptor to the catalytic alpha and beta subunits (GNPTAB). Enhances the rate of N-acetylglucosamine-1-phosphate transfer to the oligosaccharides of acid hydrolase acceptors. The chain is N-acetylglucosamine-1-phosphotransferase subunit gamma (GNPTG) from Homo sapiens (Human).